The following is a 353-amino-acid chain: Delta-aminolevulinic acid dehydratase (353 aa).

The active-site Schiff-base intermediate with substrate is K221. 5-aminolevulinate-binding residues include R231 and K244. A Mg(2+)-binding site is contributed by E260. The active-site Schiff-base intermediate with substrate is the K275. S301 and Y340 together coordinate 5-aminolevulinate.

It belongs to the ALAD family. In terms of assembly, homooctamer. Mg(2+) serves as cofactor.

It catalyses the reaction 2 5-aminolevulinate = porphobilinogen + 2 H2O + H(+). The protein operates within porphyrin-containing compound metabolism; protoporphyrin-IX biosynthesis; coproporphyrinogen-III from 5-aminolevulinate: step 1/4. Catalyzes an early step in the biosynthesis of tetrapyrroles. Binds two molecules of 5-aminolevulinate per subunit, each at a distinct site, and catalyzes their condensation to form porphobilinogen. Required for nodule development. The chain is Delta-aminolevulinic acid dehydratase (hemB) from Bradyrhizobium diazoefficiens (strain JCM 10833 / BCRC 13528 / IAM 13628 / NBRC 14792 / USDA 110).